A 201-amino-acid chain; its full sequence is Potassium-transporting ATPase KdpC subunit (201 aa).

Residues 13–33 (IIFMIFTILCGGIYTIFITGI) traverse the membrane as a helical segment.

The protein belongs to the KdpC family. As to quaternary structure, the system is composed of three essential subunits: KdpA, KdpB and KdpC.

It localises to the cell membrane. Functionally, part of the high-affinity ATP-driven potassium transport (or Kdp) system, which catalyzes the hydrolysis of ATP coupled with the electrogenic transport of potassium into the cytoplasm. This subunit acts as a catalytic chaperone that increases the ATP-binding affinity of the ATP-hydrolyzing subunit KdpB by the formation of a transient KdpB/KdpC/ATP ternary complex. The sequence is that of Potassium-transporting ATPase KdpC subunit from Clostridium botulinum (strain Eklund 17B / Type B).